The primary structure comprises 128 residues: Gastrotropin (128 aa).

The residue at position 2 (Ala-2) is an N-acetylalanine.

The protein belongs to the calycin superfamily. Fatty-acid binding protein (FABP) family. In terms of tissue distribution, predominantly expressed in ileum; also expressed in ovary.

Its subcellular location is the cytoplasm. The protein localises to the membrane. Functionally, binds to bile acids and is involved in enterohepatic bile acid metabolism. Required for efficient apical to basolateral transport of conjugated bile acids in ileal enterocytes. Stimulates gastric acid and pepsinogen secretion. The chain is Gastrotropin (Fabp6) from Rattus norvegicus (Rat).